Here is a 439-residue protein sequence, read N- to C-terminus: Aspartate--tRNA(Asp/Asn) ligase (439 aa).

Glutamate 177 contributes to the L-aspartate binding site. Residues 199–202 form an aspartate region; that stretch reads QLYK. Residue arginine 221 coordinates L-aspartate. ATP contacts are provided by residues 221 to 223, 229 to 231, and glutamate 362; these read RAE and RHL. Mg(2+) is bound by residues glutamate 362 and serine 365. Residues serine 365 and arginine 369 each coordinate L-aspartate. 410–413 serves as a coordination point for ATP; sequence GADR.

The protein belongs to the class-II aminoacyl-tRNA synthetase family. Type 2 subfamily. Homodimer. Requires Mg(2+) as cofactor.

It is found in the cytoplasm. It catalyses the reaction tRNA(Asx) + L-aspartate + ATP = L-aspartyl-tRNA(Asx) + AMP + diphosphate. In terms of biological role, aspartyl-tRNA synthetase with relaxed tRNA specificity since it is able to aspartylate not only its cognate tRNA(Asp) but also tRNA(Asn). Reaction proceeds in two steps: L-aspartate is first activated by ATP to form Asp-AMP and then transferred to the acceptor end of tRNA(Asp/Asn). In Methanosphaera stadtmanae (strain ATCC 43021 / DSM 3091 / JCM 11832 / MCB-3), this protein is Aspartate--tRNA(Asp/Asn) ligase.